The primary structure comprises 201 residues: MLKEVRPAVVSLLALTMITGLAYPLAVTGLATVLFPYQAQGSLVERGGKVVGSALIGQEFKGDEYFHGRPSATVAPDPADSSKTVSAPYNAANSGGSNLGPTSKALADRLSEDVAKLKAENPAAAIPVDLVTTSGSGLDPDISPEGALFQVPRVAKARGVPEEQIRKLVGASINQPLGGVLGEPRVNVLKLNLALDAAAPR.

Residues 12 to 34 (LLALTMITGLAYPLAVTGLATVL) form a helical membrane-spanning segment. The interval 73–102 (TVAPDPADSSKTVSAPYNAANSGGSNLGPT) is disordered. Residues 81–101 (SSKTVSAPYNAANSGGSNLGP) are compositionally biased toward polar residues.

It belongs to the KdpC family. As to quaternary structure, the system is composed of three essential subunits: KdpA, KdpB and KdpC.

Its subcellular location is the cell inner membrane. Its function is as follows. Part of the high-affinity ATP-driven potassium transport (or Kdp) system, which catalyzes the hydrolysis of ATP coupled with the electrogenic transport of potassium into the cytoplasm. This subunit acts as a catalytic chaperone that increases the ATP-binding affinity of the ATP-hydrolyzing subunit KdpB by the formation of a transient KdpB/KdpC/ATP ternary complex. The sequence is that of Potassium-transporting ATPase KdpC subunit from Rhodopseudomonas palustris (strain ATCC BAA-98 / CGA009).